The following is a 303-amino-acid chain: Monoglyceride lipase (303 aa).

Thr10 carries the phosphothreonine modification. Tyr58 carries the 3'-nitrotyrosine modification. The active-site Nucleophile is Ser122. Ser189 carries the post-translational modification Phosphoserine. Catalysis depends on charge relay system residues Asp239 and His269.

It belongs to the AB hydrolase superfamily. Monoacylglycerol lipase family. As to quaternary structure, homodimer. Ubiquitous. Highly expressed in adipose tissue, adrenal gland, ovary, heart, spleen, lung, skeletal muscle, kidney and testis. Highly expressed throughout the brain.

It is found in the cytoplasm. The protein localises to the cytosol. It localises to the membrane. It carries out the reaction Hydrolyzes glycerol monoesters of long-chain fatty acids.. It catalyses the reaction a 1-acylglycerol + H2O = glycerol + a fatty acid + H(+). The catalysed reaction is a 2-acylglycerol + H2O = glycerol + a fatty acid + H(+). The enzyme catalyses 1-octanoylglycerol + H2O = octanoate + glycerol + H(+). It carries out the reaction 2-(5Z,8Z,11Z,14Z-eicosatetraenoyl)-glycerol + H2O = glycerol + (5Z,8Z,11Z,14Z)-eicosatetraenoate + H(+). It catalyses the reaction 1-decanoylglycerol + H2O = decanoate + glycerol + H(+). The catalysed reaction is 1-dodecanoylglycerol + H2O = dodecanoate + glycerol + H(+). The enzyme catalyses 1-tetradecanoylglycerol + H2O = tetradecanoate + glycerol + H(+). It carries out the reaction 2-hexadecanoylglycerol + H2O = glycerol + hexadecanoate + H(+). It catalyses the reaction 1-(9Z-octadecenoyl)-glycerol + H2O = glycerol + (9Z)-octadecenoate + H(+). The catalysed reaction is 2-(9Z-octadecenoyl)-glycerol + H2O = glycerol + (9Z)-octadecenoate + H(+). The enzyme catalyses 2-(9Z,12Z-octadecadienoyl)-glycerol + H2O = (9Z,12Z)-octadecadienoate + glycerol + H(+). It carries out the reaction 1-(5Z,8Z,11Z,14Z-eicosatetraenoyl)-glycerol + H2O = glycerol + (5Z,8Z,11Z,14Z)-eicosatetraenoate + H(+). It catalyses the reaction 1-(9Z,12Z-octadecadienoyl)-glycerol + H2O = (9Z,12Z)-octadecadienoate + glycerol + H(+). The catalysed reaction is 1-hexadecanoylglycerol + H2O = glycerol + hexadecanoate + H(+). The enzyme catalyses 1-octadecanoylglycerol + H2O = octadecanoate + glycerol + H(+). It carries out the reaction prostaglandin E2 1-glyceryl ester + H2O = prostaglandin E2 + glycerol + H(+). It catalyses the reaction prostaglandin D2-1-glycerol ester + H2O = prostaglandin D2 + glycerol + H(+). The catalysed reaction is 2-glyceryl-15-deoxy-Delta(12,14)-prostaglandin J2 + H2O = 15-deoxy-Delta(12,14)-prostaglandin J2 + glycerol + H(+). The enzyme catalyses prostaglandin F2alpha 1-glyceryl ester + H2O = prostaglandin F2alpha + glycerol + H(+). It participates in glycerolipid metabolism; triacylglycerol degradation. Converts monoacylglycerides to free fatty acids and glycerol. Hydrolyzes the endocannabinoid 2-arachidonoylglycerol, and thereby contributes to the regulation of endocannabinoid signaling, nociperception and perception of pain. Regulates the levels of fatty acids that serve as signaling molecules and promote cancer cell migration, invasion and tumor growth. This chain is Monoglyceride lipase, found in Rattus norvegicus (Rat).